The chain runs to 305 residues: Translation initiation factor eIF2B subunit alpha (305 aa).

Position 35 is an N6-acetyllysine (K35).

This sequence belongs to the eIF-2B alpha/beta/delta subunits family. Component of the translation initiation factor 2B (eIF2B) complex which is a heterodecamer of two sets of five different subunits: alpha, beta, gamma, delta and epsilon. Subunits alpha, beta and delta comprise a regulatory subcomplex and subunits epsilon and gamma comprise a catalytic subcomplex. Within the complex, the hexameric regulatory complex resides at the center, with the two heterodimeric catalytic subcomplexes bound on opposite sides.

It is found in the cytoplasm. The protein resides in the cytosol. Activated by the chemical integrated stress response (ISR) inhibitor ISRIB which stimulates guanine nucleotide exchange factor activity for both phosphorylated and unphosphorylated eIF2. Functionally, acts as a component of the translation initiation factor 2B (eIF2B) complex, which catalyzes the exchange of GDP for GTP on eukaryotic initiation factor 2 (eIF2) gamma subunit. Its guanine nucleotide exchange factor activity is repressed when bound to eIF2 complex phosphorylated on the alpha subunit, thereby limiting the amount of methionyl-initiator methionine tRNA available to the ribosome and consequently global translation is repressed. This chain is Translation initiation factor eIF2B subunit alpha (Eif2b1), found in Rattus norvegicus (Rat).